A 749-amino-acid chain; its full sequence is MGECPFAHQANVDRKRVPAAGFGTKNSDWWPNAVKLNVLRQHQAKSDPFNAEFDYAAAFNSLDYDALKKDLTHLMTDSQDWWPADYGHYGGFFIRMSWHAAGTYRVQDGRGGGGEGQQRFAPLNSWPDNGNLDKARRLLWPIKQKYGNKISWADLLLLAGNVALESMGFKTFGFAGGRADTWEADQSTYWGGETTWLANDVRYEEGTKNGGDINDLKNRNLDHALAASHMGLIYVNPEGPNGEPDPVAAAHDIRTTFGRMAMNDEETVALIAGGHTFGKTHGAGNPDLVGPEPNGAPIEAQGFGWTSKHGSGKAGDAITSGLEVVWTSKPTEWSNLYLKYLFEFEWEHDKSPAGANQFVAKNADAIIPDPFDPSKKRRPTMLTTDLSLRYDPAYEKISRRFLENHDEFADAFARAWFQLLHRDMGPRARWLGPEVPKEILIWEDPVPTADYALVDDRDLAGLKQAIFATGVEPSKFLATAWASAASYRDSDKRGGANGARIRLAPMKDWEVNNPQQLAEVIKALEGVQQQFNSSNQGGKKISIADLIVLAGNAALEKASGLPVPFTPGRTDATQEQTEVDTFEFLKPVADGFRNYGQSTDRVCAEQILIDRANLLTLTPPELTVLIGGLRALGLNYNGSSHGVLTHRRGQLSNDFFVNLLDMSTEWKAADGGKGEVFDGVDRKSGQKKWSATRADLVFGSQAELRALAENYAQADNADKFKKDFVTAWNKVMNLDRFDVKKSNIARARF.

The tryptophyl-tyrosyl-methioninium (Trp-Tyr) (with M-260) cross-link spans 98-234; sequence WHAAGTYRVQ…LAASHMGLIY (137 aa). His99 functions as the Proton acceptor in the catalytic mechanism. A cross-link (tryptophyl-tyrosyl-methioninium (Tyr-Met) (with W-98)) is located at residues 234-260; it reads YVNPEGPNGEPDPVAAAHDIRTTFGRM. His275 contributes to the heme b binding site.

The protein belongs to the peroxidase family. Peroxidase/catalase subfamily. In terms of assembly, homodimer or homotetramer. Heme b is required as a cofactor. Post-translationally, formation of the three residue Trp-Tyr-Met cross-link is important for the catalase, but not the peroxidase activity of the enzyme.

It localises to the cytoplasm. It carries out the reaction H2O2 + AH2 = A + 2 H2O. It catalyses the reaction 2 H2O2 = O2 + 2 H2O. Bifunctional enzyme with both catalase and broad-spectrum peroxidase activity. The protein is Catalase-peroxidase of Mycosarcoma maydis (Corn smut fungus).